A 792-amino-acid chain; its full sequence is DEAD-box ATP-dependent RNA helicase 40 (792 aa).

Residues 1–16 are compositionally biased toward low complexity; the sequence is MSAGTAPAAPRYAPDD. Disordered stretches follow at residues 1 to 25 and 44 to 118; these read MSAG…PWRG and TQYE…PLPA. One can recognise a WW domain in the interval 17-51; the sequence is PSLPKPWRGLVDGTTGYLYYWNPETNITQYEKPLP. The segment covering 52-68 has biased composition (pro residues); it reads PEDQLPPPPPLPPPPPR. Basic and acidic residues-rich tracts occupy residues 70-80 and 88-108; these read GRGDRDRDRRD and PRRD…DHRS. A Q motif motif is present at residues 150 to 178; it reads TSFETGGFPPEILKEIQRAGFSSPTPIQA. Residues 181–355 enclose the Helicase ATP-binding domain; the sequence is WPIALQCQDV…EDLLVHPVQV (175 aa). Position 194–201 (194–201) interacts with ATP; it reads AKTGSGKT. A DEAD box motif is present at residues 303–306; the sequence is DEAD. The 145-residue stretch at 384 to 528 folds into the Helicase C-terminal domain; sequence RLEQILRSQD…RVPRDLADMA (145 aa). Residues 523–792 are disordered; that stretch reads DLADMASRGG…NATVQNGGDN (270 aa). Basic and acidic residues-rich tracts occupy residues 543 to 560 and 572 to 588; these read TRSD…RYGG and DSSR…DGRS. Composition is skewed to basic residues over residues 589 to 599 and 609 to 654; these read RRSGRGRSRSR and RSPK…RRHE. The span at 668–708 shows a compositional bias: basic and acidic residues; it reads GHGERKRTPEADPSRNHTNHSDPKDDRHPEDGKVGKVDLDR. The span at 725 to 739 shows a compositional bias: polar residues; it reads GKTSRSVSPGNQVEG. A compositionally biased stretch (acidic residues) spans 764-777; sequence DEEEGMIDEDGEIA.

It belongs to the DEAD box helicase family. DDX5/DBP2 subfamily.

Its subcellular location is the nucleus. It carries out the reaction ATP + H2O = ADP + phosphate + H(+). Its function is as follows. ATP-dependent RNA helicase involved nonsense-mediated mRNA decay and ribosome biogenesis through rRNA processing. The polypeptide is DEAD-box ATP-dependent RNA helicase 40 (Oryza sativa subsp. japonica (Rice)).